Here is a 366-residue protein sequence, read N- to C-terminus: Chorismate synthase (366 aa).

NADP(+)-binding residues include Arg48 and Arg54. Residues 125–127 (RSS), 237–238 (NA), Gly277, 292–296 (KPTSS), and Arg318 each bind FMN.

Belongs to the chorismate synthase family. As to quaternary structure, homotetramer. FMNH2 is required as a cofactor.

The catalysed reaction is 5-O-(1-carboxyvinyl)-3-phosphoshikimate = chorismate + phosphate. Its pathway is metabolic intermediate biosynthesis; chorismate biosynthesis; chorismate from D-erythrose 4-phosphate and phosphoenolpyruvate: step 7/7. Catalyzes the anti-1,4-elimination of the C-3 phosphate and the C-6 proR hydrogen from 5-enolpyruvylshikimate-3-phosphate (EPSP) to yield chorismate, which is the branch point compound that serves as the starting substrate for the three terminal pathways of aromatic amino acid biosynthesis. This reaction introduces a second double bond into the aromatic ring system. In Acidovorax ebreus (strain TPSY) (Diaphorobacter sp. (strain TPSY)), this protein is Chorismate synthase.